The following is a 423-amino-acid chain: Putative galacturan 1,4-alpha-galacturonidase C (423 aa).

An N-terminal signal peptide occupies residues 1-20 (MQLRASVLLSFLGLASVGHA). 6 N-linked (GlcNAc...) asparagine glycosylation sites follow: N92, N98, N118, N156, N179, and N191. PbH1 repeat units lie at residues 215–236 (ATNIQLTNFVYQGGDDCIAIKP) and 238–258 (SYNIDIQNVTCRGGNGIAIGS). D229 (proton donor) is an active-site residue. A disulfide bridge links C231 with C248. N245, N344, and N362 each carry an N-linked (GlcNAc...) asparagine glycan. A disulfide bond links C379 and C385. An N-linked (GlcNAc...) asparagine glycan is attached at N400.

This sequence belongs to the glycosyl hydrolase 28 family.

Its subcellular location is the secreted. It catalyses the reaction [(1-&gt;4)-alpha-D-galacturonosyl](n) + H2O = alpha-D-galacturonate + [(1-&gt;4)-alpha-D-galacturonosyl](n-1). In terms of biological role, specific in hydrolyzing the terminal glycosidic bond of polygalacturonic acid and oligogalacturonates. This is Putative galacturan 1,4-alpha-galacturonidase C (rgxC) from Aspergillus niger (strain ATCC MYA-4892 / CBS 513.88 / FGSC A1513).